The sequence spans 724 residues: Palmitoyltransferase AKR1 (724 aa).

Residues 1–308 are Cytoplasmic-facing; the sequence is MSGQLNVAED…HAKMVTFFTP (308 aa). 6 ANK repeats span residues 54–84, 90–119, 124–153, 157–187, 191–220, and 224–253; these read PTLV…DVKA, EQVS…DVNI, LEAT…DPLI, QGYN…PVDS, TGKT…DVRV, and GGFT…DVFL. Residues 309 to 329 traverse the membrane as a helical segment; that stretch reads WLILGLILSFFAYFSILLAIL. Residues 330–331 lie on the Lumenal side of the membrane; the sequence is GC. A helical transmembrane segment spans residues 332-352; sequence LLTVLAAGYGLYNFVFPSFIL. Residues 353 to 360 lie on the Cytoplasmic side of the membrane; it reads MKRIVIFK. Residues 361 to 381 traverse the membrane as a helical segment; the sequence is TPLLAGILSGTIFWLLYVWLF. Residues 382–392 lie on the Lumenal side of the membrane; sequence KMLPATFDDEP. The chain crosses the membrane as a helical span at residues 393–413; that stretch reads ILNLTVFALFAGVVFLLTKLL. Topologically, residues 414–489 are cytoplasmic; the sequence is QSDPGYIVPA…YNYIGFRNHK (76 aa). A DHHC domain is found at 446–496; the sequence is HFCIHSWIRLPLRAKYKRFVHSVILRYDHYCPWIYNYIGFRNHKIFIYFIL. C476 serves as the catalytic S-palmitoyl cysteine intermediate. A helical transmembrane segment spans residues 490-510; sequence IFIYFILLLDLGILALAKLCL. Topologically, residues 511–543 are lumenal; sequence EYFDELKDHAKNKDALKCSILSKDLCAGFTYDP. A helical transmembrane segment spans residues 544-564; sequence FTLFLLEWVCVQGMWILALSF. Residues 565–724 lie on the Cytoplasmic side of the membrane; the sequence is VQFFECLKGV…ERVISIEEIV (160 aa).

It belongs to the DHHC palmitoyltransferase family. AKR/ZDHHC17 subfamily.

It is found in the early endosome membrane. The protein resides in the golgi apparatus membrane. The enzyme catalyses L-cysteinyl-[protein] + hexadecanoyl-CoA = S-hexadecanoyl-L-cysteinyl-[protein] + CoA. Palmitoyltransferase specific for casein kinase 1. This is Palmitoyltransferase AKR1 (AKR1) from Eremothecium gossypii (strain ATCC 10895 / CBS 109.51 / FGSC 9923 / NRRL Y-1056) (Yeast).